Here is a 169-residue protein sequence, read N- to C-terminus: Large ribosomal subunit protein uL10 (169 aa).

This sequence belongs to the universal ribosomal protein uL10 family. As to quaternary structure, part of the ribosomal stalk of the 50S ribosomal subunit. The N-terminus interacts with L11 and the large rRNA to form the base of the stalk. The C-terminus forms an elongated spine to which L12 dimers bind in a sequential fashion forming a multimeric L10(L12)X complex.

Its function is as follows. Forms part of the ribosomal stalk, playing a central role in the interaction of the ribosome with GTP-bound translation factors. This chain is Large ribosomal subunit protein uL10, found in Deinococcus geothermalis (strain DSM 11300 / CIP 105573 / AG-3a).